The primary structure comprises 296 residues: MAWIQIRLNSTNEKAEQMSDFLEEIGSVSVTFMDSQDTPIFEPLPGETRLWGNTDVIALFDAETDMAEIVRLLKEAKHLDSNTAYKIGTNRRLKNWEREWMDNFHPMQFGKRLWICPSWRDVPDENAVNVMLDPGLAFGTGTHPTTALCLEWLDGLDLKDKSVIDFGCGSGILAIAALKLGAKSAVGIDIDPQAILASRNNAEQNGVTDRLQLFLSDEKPSDLKADVVVANILAGPLKELYPIISQLVKPNGDLGLSGILETQAQSVCDTYTQTFALEPVAAREEWCRITGKLKTL.

Residues T146, G167, D189, and N231 each coordinate S-adenosyl-L-methionine.

Belongs to the methyltransferase superfamily. PrmA family.

Its subcellular location is the cytoplasm. The enzyme catalyses L-lysyl-[protein] + 3 S-adenosyl-L-methionine = N(6),N(6),N(6)-trimethyl-L-lysyl-[protein] + 3 S-adenosyl-L-homocysteine + 3 H(+). In terms of biological role, methylates ribosomal protein L11. The protein is Ribosomal protein L11 methyltransferase of Haemophilus influenzae (strain ATCC 51907 / DSM 11121 / KW20 / Rd).